The sequence spans 416 residues: Tyrosine permease (416 aa).

Transmembrane regions (helical) follow at residues 13–33 (GTML…PIAM), 34–54 (AGIW…MMLL), 86–106 (VVVG…YISG), 127–147 (LSVI…SLLV), 153–173 (VLII…IWHV), 192–212 (LPYI…HGNV), 231–251 (IFIG…VTMG), 260–280 (PIIA…GLFT), 286–306 (LILT…ATLG), 337–357 (VVCF…GLAF), and 389–409 (ILNL…LDVF).

The protein belongs to the amino acid/polyamine transporter 2 family. Mtr/TnaB/TyrP permease subfamily.

It localises to the cell inner membrane. In Enterobacter agglomerans (Erwinia herbicola), this protein is Tyrosine permease (tutB).